We begin with the raw amino-acid sequence, 100 residues long: Small ribosomal subunit protein uS14c (100 aa).

It belongs to the universal ribosomal protein uS14 family. Part of the 30S ribosomal subunit.

The protein localises to the plastid. Its subcellular location is the chloroplast. Its function is as follows. Binds 16S rRNA, required for the assembly of 30S particles. This Populus alba (White poplar) protein is Small ribosomal subunit protein uS14c.